A 222-amino-acid chain; its full sequence is Thiamine-phosphate synthase (222 aa).

Residues 44 to 48 (QFREK) and Asn-79 each bind 4-amino-2-methyl-5-(diphosphooxymethyl)pyrimidine. Residues Asp-80 and Asp-99 each contribute to the Mg(2+) site. Ser-117 lines the 4-amino-2-methyl-5-(diphosphooxymethyl)pyrimidine pocket. 143–145 (TET) is a 2-[(2R,5Z)-2-carboxy-4-methylthiazol-5(2H)-ylidene]ethyl phosphate binding site. Lys-146 is a 4-amino-2-methyl-5-(diphosphooxymethyl)pyrimidine binding site. 2-[(2R,5Z)-2-carboxy-4-methylthiazol-5(2H)-ylidene]ethyl phosphate contacts are provided by residues Gly-175 and 195 to 196 (IS).

It belongs to the thiamine-phosphate synthase family. As to quaternary structure, monomer. Mg(2+) serves as cofactor.

It catalyses the reaction 2-[(2R,5Z)-2-carboxy-4-methylthiazol-5(2H)-ylidene]ethyl phosphate + 4-amino-2-methyl-5-(diphosphooxymethyl)pyrimidine + 2 H(+) = thiamine phosphate + CO2 + diphosphate. The catalysed reaction is 2-(2-carboxy-4-methylthiazol-5-yl)ethyl phosphate + 4-amino-2-methyl-5-(diphosphooxymethyl)pyrimidine + 2 H(+) = thiamine phosphate + CO2 + diphosphate. It carries out the reaction 4-methyl-5-(2-phosphooxyethyl)-thiazole + 4-amino-2-methyl-5-(diphosphooxymethyl)pyrimidine + H(+) = thiamine phosphate + diphosphate. It functions in the pathway cofactor biosynthesis; thiamine diphosphate biosynthesis; thiamine phosphate from 4-amino-2-methyl-5-diphosphomethylpyrimidine and 4-methyl-5-(2-phosphoethyl)-thiazole: step 1/1. In terms of biological role, condenses 4-methyl-5-(beta-hydroxyethyl)thiazole monophosphate (THZ-P) and 2-methyl-4-amino-5-hydroxymethyl pyrimidine pyrophosphate (HMP-PP) to form thiamine monophosphate (TMP). Is also able to use the 2-methoxy analog MeO-HMP-PP, as substrate in vitro, but not the 2-trifluoromethyl analog CF(3)-HMP-PP. This chain is Thiamine-phosphate synthase (thiE), found in Bacillus subtilis (strain 168).